The primary structure comprises 260 residues: Glutamate racemase (260 aa).

Substrate is bound by residues 14–15 (DS) and 46–47 (YG). Cysteine 77 functions as the Proton donor/acceptor in the catalytic mechanism. Residue 78–79 (NT) coordinates substrate. Cysteine 188 acts as the Proton donor/acceptor in catalysis. A substrate-binding site is contributed by 189–190 (TH).

The protein belongs to the aspartate/glutamate racemases family.

It carries out the reaction L-glutamate = D-glutamate. The protein operates within cell wall biogenesis; peptidoglycan biosynthesis. Its function is as follows. Provides the (R)-glutamate required for cell wall biosynthesis. The polypeptide is Glutamate racemase (Clostridium perfringens (strain 13 / Type A)).